The sequence spans 418 residues: Glutamyl-tRNA reductase (418 aa).

Substrate contacts are provided by residues Thr-49–Arg-52, Ser-109, Glu-114–Gln-116, and Gln-120. The active-site Nucleophile is the Cys-50. Position 189–194 (Gly-189–Ile-194) interacts with NADP(+).

Belongs to the glutamyl-tRNA reductase family. Homodimer.

It carries out the reaction (S)-4-amino-5-oxopentanoate + tRNA(Glu) + NADP(+) = L-glutamyl-tRNA(Glu) + NADPH + H(+). It functions in the pathway porphyrin-containing compound metabolism; protoporphyrin-IX biosynthesis; 5-aminolevulinate from L-glutamyl-tRNA(Glu): step 1/2. Its function is as follows. Catalyzes the NADPH-dependent reduction of glutamyl-tRNA(Glu) to glutamate 1-semialdehyde (GSA). This chain is Glutamyl-tRNA reductase, found in Escherichia coli O127:H6 (strain E2348/69 / EPEC).